The primary structure comprises 286 residues: Aminoglycoside N(3)-acetyltransferase III (286 aa).

This sequence belongs to the antibiotic N-acetyltransferase family.

The catalysed reaction is a 2-deoxystreptamine antibiotic + acetyl-CoA = an N(3)-acetyl-2-deoxystreptamine antibiotic + CoA + H(+). Its function is as follows. Resistance to antibiotics containing the 2-deoxy-streptamine ring including gentamicin, kanamycin, tobramycin, neomycin and apramycin. The chain is Aminoglycoside N(3)-acetyltransferase III (aacC3) from Salmonella sp.